A 360-amino-acid chain; its full sequence is Glycoprotein-N-acetylgalactosamine 3-beta-galactosyltransferase 1 (360 aa).

Topologically, residues 1 to 7 (MSIICAK) are cytoplasmic. A helical; Signal-anchor for type II membrane protein membrane pass occupies residues 8–28 (VAWLPLTLGTAMGFLITFYLA). Residues 29 to 360 (RTLLERNSQP…SDFLEPPMES (332 aa)) lie on the Lumenal side of the membrane. A disulfide bond links C79 and C103. Residues M82, E126, G127, R128, and K134 each coordinate UDP. A glycan (N-linked (GlcNAc...) asparagine) is linked at N148. D157 is a UDP binding site. 2 residues coordinate Mn(2+): D157 and D159. Residue N173 is glycosylated (N-linked (GlcNAc...) asparagine). C220 and C234 are disulfide-bonded. Position 274 (W274) interacts with a glycoprotein. A disulfide bond links C289 and C290. UDP contacts are provided by H298 and Y299. H298 lines the Mn(2+) pocket. 2 N-linked (GlcNAc...) asparagine glycosylation sites follow: N341 and N347.

It belongs to the glycosyltransferase 31 family. Beta3-Gal-T subfamily. In terms of assembly, homodimer; disulfide-linked. The cofactor is Mn(2+).

The protein resides in the membrane. It carries out the reaction an N-acetyl-alpha-D-galactosaminyl derivative + UDP-alpha-D-galactose = a beta-D-galactosyl-(1-&gt;3)-N-acetyl-alpha-D-galactosaminyl derivative + UDP + H(+). The protein operates within protein modification; protein glycosylation. Functionally, glycosyltransferase that generates the core 1 O-glycan Gal-beta1-3GalNAc-alpha1-Ser/Thr (T antigen), which is a precursor for many extended O-glycans in glycoproteins. The chain is Glycoprotein-N-acetylgalactosamine 3-beta-galactosyltransferase 1 (c1galt1) from Xenopus laevis (African clawed frog).